Reading from the N-terminus, the 824-residue chain is Spindle-defective protein 2 (824 aa).

Acidic residues-rich tracts occupy residues 16-27 and 35-44; these read EIEDSPIDDNDN and GDVELEEEEV. The segment at 16 to 98 is disordered; it reads EIEDSPIDDN…SRPASVMSDK (83 aa). Over residues 59-70 the composition is skewed to polar residues; it reads TNMTNPKVNDLT. Residues 81 to 98 show a composition bias toward low complexity; sequence SAASSRSASRPASVMSDK. Residues 111–131 are a coiled coil; that stretch reads ENAIEEYTNQVFADENKADLL. The disordered stretch occupies residues 189-252; that stretch reads RAKPGANDNE…GQYQGPNFDL (64 aa). A compositionally biased stretch (polar residues) spans 207–225; sequence NVPTTSDKSAFITSPMNST. Residues 304–324 are a coiled coil; the sequence is NNKNQDLFAALEEARKRRAAQ. 2 disordered regions span residues 342-372 and 433-455; these read KPTS…LTTS and NNGN…VRTM. The span at 349–366 shows a compositional bias: low complexity; that stretch reads SGNVVSSTSNDNTTAASS.

Interacts with sas-7 (via C-terminus); may be recruited to centrioles by sas-7.

Its subcellular location is the cytoplasm. The protein resides in the cytoskeleton. It is found in the microtubule organizing center. It localises to the centrosome. The protein localises to the centriole. Functionally, required both for centrosome duplication and maturation. Required for pericentriolar material (PCM) recruitment. This is Spindle-defective protein 2 from Caenorhabditis elegans.